A 323-amino-acid polypeptide reads, in one-letter code: tRNA U34 carboxymethyltransferase (323 aa).

Carboxy-S-adenosyl-L-methionine contacts are provided by residues lysine 91, tryptophan 105, lysine 110, glycine 130, 152–154 (DPT), 181–182 (IE), methionine 196, tyrosine 200, and arginine 315.

Belongs to the class I-like SAM-binding methyltransferase superfamily. CmoB family. In terms of assembly, homotetramer.

The enzyme catalyses carboxy-S-adenosyl-L-methionine + 5-hydroxyuridine(34) in tRNA = 5-carboxymethoxyuridine(34) in tRNA + S-adenosyl-L-homocysteine + H(+). Its function is as follows. Catalyzes carboxymethyl transfer from carboxy-S-adenosyl-L-methionine (Cx-SAM) to 5-hydroxyuridine (ho5U) to form 5-carboxymethoxyuridine (cmo5U) at position 34 in tRNAs. This Escherichia coli O6:H1 (strain CFT073 / ATCC 700928 / UPEC) protein is tRNA U34 carboxymethyltransferase.